We begin with the raw amino-acid sequence, 82 residues long: uncharacterized protein (82 aa).

This is an uncharacterized protein from Escherichia coli (strain K12).